The primary structure comprises 652 residues: MNKRMNELVALLNRYATEYYTSDNPSVSDSEYDRLYRELVELETAYPEQVLADSPTHRVGGKVLDGFEKYSHQYPLYSLQDAFSREELDAFDARVRKEVAHPTYICELKIDGLSISLTYEKGILVAGVTRGDGSIGENITENLKRVKDIPLTLPEELDITVRGECYMPRASFDQVNQVRQENGEPEFANPRNAAAGTLRQLDTAVVAKRNLATFLYQEASPSTRDSQEKGLKYLEQLGFVVNPKRILAENIDEIWNFIQEVGQERENLPYDIDGVVIKVNDLASQEELGFTVKAPKWAVAYKFPAEEKEAQLLSVDWTVGRTGVVTPTANLTPVQLAGTTVSRATLHNVDYIAEKDIRKDDTVIVYKAGDIIPAVLRVVESKRVSEEKLDIPTNCPSCNSDLLHFEDEVALRCINPRCPAQIMEGLIHFASRDAMNITGLGPSIVEKLFAANLVKDVADIYRLQEEDFLLLEGVKEKSAAKLYQAIQASKENSAEKLLFGLGIRHVGSKASQLLLQYFHSIENLYQADSEEVASIESLGGVIAKSLQTYFATEGSEILLRELKETGVNLDYKGQTVVADAALSGLTVVLTGKLERLKRSEAKSKLESLGAKVTGSVSKKTDLVVVGADAGSKLQKAQELGIQVRDEAWLESL.

Residues 29 to 33, 78 to 79, and glutamate 107 contribute to the NAD(+) site; these read DSEYD and SL. Lysine 109 acts as the N6-AMP-lysine intermediate in catalysis. NAD(+) is bound by residues arginine 130, glutamate 164, lysine 278, and lysine 302. Residues cysteine 395, cysteine 398, cysteine 413, and cysteine 418 each contribute to the Zn(2+) site. One can recognise a BRCT domain in the interval 577–652; it reads VADAALSGLT…VRDEAWLESL (76 aa).

The protein belongs to the NAD-dependent DNA ligase family. LigA subfamily. Mg(2+) is required as a cofactor. Mn(2+) serves as cofactor.

The catalysed reaction is NAD(+) + (deoxyribonucleotide)n-3'-hydroxyl + 5'-phospho-(deoxyribonucleotide)m = (deoxyribonucleotide)n+m + AMP + beta-nicotinamide D-nucleotide.. DNA ligase that catalyzes the formation of phosphodiester linkages between 5'-phosphoryl and 3'-hydroxyl groups in double-stranded DNA using NAD as a coenzyme and as the energy source for the reaction. It is essential for DNA replication and repair of damaged DNA. The sequence is that of DNA ligase from Streptococcus pneumoniae (strain Taiwan19F-14).